The chain runs to 480 residues: Ribulose bisphosphate carboxylase large chain (480 aa).

Positions 1–2 (MS) are excised as a propeptide. The residue at position 3 (Pro3) is an N-acetylproline. Lys14 is modified (N6,N6,N6-trimethyllysine). 2 residues coordinate substrate: Asn123 and Thr173. The active-site Proton acceptor is Lys175. Residue Lys177 coordinates substrate. Mg(2+)-binding residues include Lys201, Asp203, and Glu204. At Lys201 the chain carries N6-carboxylysine. His294 functions as the Proton acceptor in the catalytic mechanism. 3 residues coordinate substrate: Arg295, His327, and Ser379.

This sequence belongs to the RuBisCO large chain family. Type I subfamily. As to quaternary structure, heterohexadecamer of 8 large chains and 8 small chains; disulfide-linked. The disulfide link is formed within the large subunit homodimers. Requires Mg(2+) as cofactor. Post-translationally, the disulfide bond which can form in the large chain dimeric partners within the hexadecamer appears to be associated with oxidative stress and protein turnover.

The protein resides in the plastid. It is found in the chloroplast. The catalysed reaction is 2 (2R)-3-phosphoglycerate + 2 H(+) = D-ribulose 1,5-bisphosphate + CO2 + H2O. It carries out the reaction D-ribulose 1,5-bisphosphate + O2 = 2-phosphoglycolate + (2R)-3-phosphoglycerate + 2 H(+). In terms of biological role, ruBisCO catalyzes two reactions: the carboxylation of D-ribulose 1,5-bisphosphate, the primary event in carbon dioxide fixation, as well as the oxidative fragmentation of the pentose substrate in the photorespiration process. Both reactions occur simultaneously and in competition at the same active site. The sequence is that of Ribulose bisphosphate carboxylase large chain from Mollugo verticillata (Green carpetweed).